The chain runs to 271 residues: Phosphonoacetaldehyde hydrolase (271 aa).

Residue D12 is the Nucleophile of the active site. Mg(2+) is bound by residues D12 and A14. The Schiff-base intermediate with substrate role is filled by K54. Residue D188 coordinates Mg(2+).

Belongs to the HAD-like hydrolase superfamily. PhnX family. Homodimer. It depends on Mg(2+) as a cofactor.

The catalysed reaction is phosphonoacetaldehyde + H2O = acetaldehyde + phosphate + H(+). In terms of biological role, involved in phosphonate degradation. The chain is Phosphonoacetaldehyde hydrolase from Vibrio vulnificus (strain CMCP6).